Reading from the N-terminus, the 334-residue chain is Mucin-15 (334 aa).

An N-terminal signal peptide occupies residues 1-23 (MLALAKILLISTLFYSLLSGSHG). At 24–236 (KENQDINTTQ…SDPQKENRNT (213 aa)) the chain is on the extracellular side. N-linked (GlcNAc...) asparagine glycosylation is found at N30, N61, N79, N90, N148, N155, N163, N218, and N225. The interval 64–104 (TSNLKASHSPPLNLPNNSHGITDFSSNSSAEHSLGSLKPTS) is disordered. Residues 77–94 (LPNNSHGITDFSSNSSAE) are compositionally biased toward polar residues. Residues 237–257 (GIVFGAILGAILGVSLLTLVG) traverse the membrane as a helical segment. The Cytoplasmic segment spans residues 258-334 (YLLCGKRKTD…DDIPPLRTSV (77 aa)). The segment at 304–334 (PTLNDSAMPESEENARDGIPMDDIPPLRTSV) is disordered.

Post-translationally, highly glycosylated (N- and O-linked carbohydrates). Expressed in spleen, thymus, prostate, testis, ovary, small intestine, colon, peripheral blood leukocyte, bone marrow, lymph node and lung.

The protein resides in the cell membrane. It localises to the secreted. Functionally, may play a role in the cell adhesion to the extracellular matrix. This is Mucin-15 (MUC15) from Homo sapiens (Human).